The sequence spans 393 residues: S-adenosylmethionine synthase 4 (393 aa).

A Mg(2+)-binding site is contributed by Glu9. His15 contributes to the ATP binding site. Glu43 is a K(+) binding site. Residues Glu56 and Gln99 each coordinate L-methionine. Residues 167 to 169, 235 to 238, Asp246, 252 to 253, Ala269, Lys273, and Lys277 contribute to the ATP site; these read DGK, SGRF, and RK. L-methionine is bound at residue Asp246. Lys277 is a binding site for L-methionine.

Belongs to the AdoMet synthase family. In terms of assembly, homotetramer. Mn(2+) is required as a cofactor. It depends on Mg(2+) as a cofactor. Co(2+) serves as cofactor. The cofactor is K(+). Detected in trichomes (at the protein level).

Its subcellular location is the cytoplasm. The catalysed reaction is L-methionine + ATP + H2O = S-adenosyl-L-methionine + phosphate + diphosphate. It participates in amino-acid biosynthesis; S-adenosyl-L-methionine biosynthesis; S-adenosyl-L-methionine from L-methionine: step 1/1. Functionally, catalyzes the formation of S-adenosylmethionine from methionine and ATP. The reaction comprises two steps that are both catalyzed by the same enzyme: formation of S-adenosylmethionine (AdoMet) and triphosphate, and subsequent hydrolysis of the triphosphate. The sequence is that of S-adenosylmethionine synthase 4 (METK4) from Arabidopsis thaliana (Mouse-ear cress).